The primary structure comprises 90 residues: Molybdopterin synthase sulfur carrier subunit (90 aa).

Gly-90 carries the post-translational modification 1-thioglycine; alternate. Gly-90 is modified (glycyl adenylate; alternate).

It belongs to the MoaD family. MOCS2A subfamily. In terms of assembly, heterotetramer; composed of 2 small (Mocs2A) and 2 large (Mocs2B) subunits. Post-translationally, C-terminal thiocarboxylation occurs in 2 steps, it is first acyl-adenylated (-COAMP) via the hesA/moeB/thiF part of MOCS3, then thiocarboxylated (-COSH) via the rhodanese domain of MOCS3.

The protein localises to the cytoplasm. It participates in cofactor biosynthesis; molybdopterin biosynthesis. In terms of biological role, acts as a sulfur carrier required for molybdopterin biosynthesis. Component of the molybdopterin synthase complex that catalyzes the conversion of precursor Z into molybdopterin by mediating the incorporation of 2 sulfur atoms into precursor Z to generate a dithiolene group. In the complex, serves as sulfur donor by being thiocarboxylated (-COSH) at its C-terminus by MOCS3. After interaction with Mocs2B, the sulfur is then transferred to precursor Z to form molybdopterin. The chain is Molybdopterin synthase sulfur carrier subunit from Drosophila simulans (Fruit fly).